The primary structure comprises 322 residues: Elongation factor P--(R)-beta-lysine ligase (322 aa).

72-74 lines the substrate pocket; sequence SPE. ATP is bound by residues 96–98 and asparagine 106; that span reads RNN. Position 115 (tyrosine 115) interacts with substrate. 241–242 lines the ATP pocket; sequence EL. Substrate is bound at residue glutamate 248. Glycine 297 lines the ATP pocket.

Belongs to the class-II aminoacyl-tRNA synthetase family. EpmA subfamily. As to quaternary structure, homodimer.

The enzyme catalyses D-beta-lysine + L-lysyl-[protein] + ATP = N(6)-((3R)-3,6-diaminohexanoyl)-L-lysyl-[protein] + AMP + diphosphate + H(+). Functionally, with EpmB is involved in the beta-lysylation step of the post-translational modification of translation elongation factor P (EF-P). Catalyzes the ATP-dependent activation of (R)-beta-lysine produced by EpmB, forming a lysyl-adenylate, from which the beta-lysyl moiety is then transferred to the epsilon-amino group of a conserved specific lysine residue in EF-P. In Buchnera aphidicola subsp. Baizongia pistaciae (strain Bp), this protein is Elongation factor P--(R)-beta-lysine ligase.